A 465-amino-acid polypeptide reads, in one-letter code: Gamma-aminobutyric acid receptor subunit alpha-6 (465 aa).

The first 19 residues, 1 to 19, serve as a signal peptide directing secretion; that stretch reads MALLIAWVCVAVSIEKALG. The Extracellular segment spans residues 20–243; sequence GQGDGGDLYS…FHLQRKMGYF (224 aa). Asparagine 31 is a glycosylation site (N-linked (GlcNAc...) asparagine). Arginine 84 contacts 4-aminobutanoate. 2 N-linked (GlcNAc...) asparagine glycosylation sites follow: asparagine 128 and asparagine 141. Threonine 147 contributes to the 4-aminobutanoate binding site. The cysteines at positions 156 and 170 are disulfide-linked. A helical membrane pass occupies residues 244-264; sequence MIQIYTPCIMTVILSQVSFWI. Over 265–270 the chain is Cytoplasmic; it reads NKESVP. A helical membrane pass occupies residues 271-290; it reads ARTVFGITTVLTMTTLSISA. Over 291-304 the chain is Extracellular; that stretch reads RHSLPKVSYATAMD. Residues 305 to 325 form a helical membrane-spanning segment; the sequence is WFIAVCFAFVFSALIEFAAVN. The Cytoplasmic portion of the chain corresponds to 326-424; it reads YFTNLQTQRA…GTSKIDQYSR (99 aa). A disordered region spans residues 392–415; the sequence is NSASQCQPVSAPPPAPPAPPPVGG. The span at 401 to 413 shows a compositional bias: pro residues; it reads SAPPPAPPAPPPV. The chain crosses the membrane as a helical span at residues 425–445; it reads ILFPVAFAGFNLVYWVVYLSK. Residues 446–465 are Extracellular-facing; that stretch reads DTMEFFEPTAMHLRNDHQSN.

The protein belongs to the ligand-gated ion channel (TC 1.A.9) family. Gamma-aminobutyric acid receptor (TC 1.A.9.5) subfamily. GABRA6 sub-subfamily. In terms of assembly, heteropentamer, formed by a combination of alpha (GABRA1-6), beta (GABRB1-3), gamma (GABRG1-3), delta (GABRD), epsilon (GABRE), rho (GABRR1-3), pi (GABRP) and theta (GABRQ) chains, each subunit exhibiting distinct physiological and pharmacological properties. Expressed in brain, in cerebellar granule cells.

It is found in the postsynaptic cell membrane. Its subcellular location is the cell membrane. The enzyme catalyses chloride(in) = chloride(out). In terms of biological role, alpha subunit of the heteropentameric ligand-gated chloride channel gated by gamma-aminobutyric acid (GABA), a major inhibitory neurotransmitter in the brain. GABA-gated chloride channels, also named GABA(A) receptors (GABAAR), consist of five subunits arranged around a central pore and contain GABA active binding site(s) located at the alpha and beta subunit interface(s). When activated by GABA, GABAARs selectively allow the flow of chloride anions across the cell membrane down their electrochemical gradient. The protein is Gamma-aminobutyric acid receptor subunit alpha-6 (GABRA6) of Gallus gallus (Chicken).